Reading from the N-terminus, the 87-residue chain is Large ribosomal subunit protein bL31B (87 aa).

Belongs to the bacterial ribosomal protein bL31 family. Type B subfamily. As to quaternary structure, part of the 50S ribosomal subunit.

The protein is Large ribosomal subunit protein bL31B of Pseudomonas aeruginosa (strain LESB58).